The primary structure comprises 63 residues: uncharacterized protein (63 aa).

This is an uncharacterized protein from Escherichia coli (strain K12).